The sequence spans 436 residues: GTPase Obg (436 aa).

In terms of domain architecture, Obg spans 2 to 160 (SMFLDTAKIQ…RELLLELKVL (159 aa)). The 178-residue stretch at 161-338 (ADVGLVGFPS…LLDATAELLD (178 aa)) folds into the OBG-type G domain. GTP contacts are provided by residues 167-174 (GFPSVGKS), 192-196 (FTTIV), 214-217 (DLPG), 284-287 (NKMD), and 319-321 (SSL). Residues Ser174 and Thr194 each contribute to the Mg(2+) site. The OCT domain occupies 358-436 (GFDEEAPAFE…IGKFEFEFVD (79 aa)).

This sequence belongs to the TRAFAC class OBG-HflX-like GTPase superfamily. OBG GTPase family. In terms of assembly, monomer. The cofactor is Mg(2+).

Its subcellular location is the cytoplasm. Its function is as follows. An essential GTPase which binds GTP, GDP and possibly (p)ppGpp with moderate affinity, with high nucleotide exchange rates and a fairly low GTP hydrolysis rate. Plays a role in control of the cell cycle, stress response, ribosome biogenesis and in those bacteria that undergo differentiation, in morphogenesis control. In Streptococcus sanguinis (strain SK36), this protein is GTPase Obg.